A 273-amino-acid polypeptide reads, in one-letter code: MTKEMPVIYIISDALGETAEYVSRAAAAQFSGIRTKIRKVPYVQDEIHIDEILEEAAKEQAIIAYTLVVKKLRNYLEKKAQDYELRTVDILGPLIKMLADQTGLLPSYTPNVTHILDEQYFRKVDAIEFAVKYDDGKDPRGVLLADVVLIGVSRTSKTPLSMYLAHKGIKAANIPLVPEVSPPQELFRVPSQKVIGLTLKPDLLNQIRTERLRTLGLGSSADYANYERIVEELEYARGIMRKVGCPIIDATGKAIEETASRILEILYKGERNV.

151–158 contacts ADP; the sequence is GVSRTSKT.

It belongs to the pyruvate, phosphate/water dikinase regulatory protein family. PDRP subfamily.

It catalyses the reaction N(tele)-phospho-L-histidyl/L-threonyl-[pyruvate, phosphate dikinase] + ADP = N(tele)-phospho-L-histidyl/O-phospho-L-threonyl-[pyruvate, phosphate dikinase] + AMP + H(+). It carries out the reaction N(tele)-phospho-L-histidyl/O-phospho-L-threonyl-[pyruvate, phosphate dikinase] + phosphate + H(+) = N(tele)-phospho-L-histidyl/L-threonyl-[pyruvate, phosphate dikinase] + diphosphate. In terms of biological role, bifunctional serine/threonine kinase and phosphorylase involved in the regulation of the pyruvate, phosphate dikinase (PPDK) by catalyzing its phosphorylation/dephosphorylation. This chain is Putative pyruvate, phosphate dikinase regulatory protein, found in Desulfitobacterium hafniense (strain Y51).